Reading from the N-terminus, the 262-residue chain is Thiazole synthase (262 aa).

The active-site Schiff-base intermediate with DXP is the Lys104. 1-deoxy-D-xylulose 5-phosphate contacts are provided by residues Gly165, 191–192, and 213–214; these read AG and NT.

The protein belongs to the ThiG family. In terms of assembly, homotetramer. Forms heterodimers with either ThiH or ThiS.

It is found in the cytoplasm. The catalysed reaction is [ThiS sulfur-carrier protein]-C-terminal-Gly-aminoethanethioate + 2-iminoacetate + 1-deoxy-D-xylulose 5-phosphate = [ThiS sulfur-carrier protein]-C-terminal Gly-Gly + 2-[(2R,5Z)-2-carboxy-4-methylthiazol-5(2H)-ylidene]ethyl phosphate + 2 H2O + H(+). The protein operates within cofactor biosynthesis; thiamine diphosphate biosynthesis. Catalyzes the rearrangement of 1-deoxy-D-xylulose 5-phosphate (DXP) to produce the thiazole phosphate moiety of thiamine. Sulfur is provided by the thiocarboxylate moiety of the carrier protein ThiS. In vitro, sulfur can be provided by H(2)S. This is Thiazole synthase from Nitrosococcus oceani (strain ATCC 19707 / BCRC 17464 / JCM 30415 / NCIMB 11848 / C-107).